The primary structure comprises 401 residues: Exodeoxyribonuclease 7 large subunit (401 aa).

Belongs to the XseA family. In terms of assembly, heterooligomer composed of large and small subunits.

The protein localises to the cytoplasm. The enzyme catalyses Exonucleolytic cleavage in either 5'- to 3'- or 3'- to 5'-direction to yield nucleoside 5'-phosphates.. Bidirectionally degrades single-stranded DNA into large acid-insoluble oligonucleotides, which are then degraded further into small acid-soluble oligonucleotides. The protein is Exodeoxyribonuclease 7 large subunit of Clostridioides difficile (strain 630) (Peptoclostridium difficile).